The following is a 315-amino-acid chain: Phosphate transport system permease protein PstC (315 aa).

Residues 1–22 (MLTKSRKYFNQTWIESLFKQTT) lie on the Cytoplasmic side of the membrane. A helical membrane pass occupies residues 23–43 (ALFALLVFILLAAILISLVIG). Residues 44–77 (SWESIKRFGGSFLLETYWDPVQEQYGAIIPILGT) lie on the Periplasmic side of the membrane. Positions 74–302 (ILGTLITAGI…VITTMVLILS (229 aa)) constitute an ABC transmembrane type-1 domain. The helical transmembrane segment at 78–98 (LITAGIALFIAVPISFGIAIF) threads the bilayer. At 99–117 (LTELAPNWLKRPISIAIEM) the chain is on the cytoplasmic side. A helical membrane pass occupies residues 118-138 (LAAIPSIIYGMWGLFVFVPLF). Residues 139-164 (QEHIQPVLIDNLGNLPGLELFFSGVP) are Periplasmic-facing. The helical transmembrane segment at 165-185 (FGVGLFTAGLVLAIMIIPFIA) threads the bilayer. Over 186–223 (SVMRDVFSIVPPMLKEGAYGLGATTWEVVRQVIVPHTR) the chain is Cytoplasmic. A helical transmembrane segment spans residues 224–244 (IGLVGSVMLGLGRALGETMAI). At 245 to 281 (TFIIGNSFQLPNSLFSPSTSIASAIANEFNEAGGLQK) the chain is on the periplasmic side. A helical transmembrane segment spans residues 282-302 (SALMELGLLLFVITTMVLILS). At 303–315 (RLMITKMQQTKGK) the chain is on the cytoplasmic side.

The protein belongs to the binding-protein-dependent transport system permease family. CysTW subfamily.

It is found in the cell inner membrane. Its function is as follows. Part of the binding-protein-dependent transport system for phosphate; probably responsible for the translocation of the substrate across the membrane. This is Phosphate transport system permease protein PstC (pstC) from Haemophilus influenzae (strain ATCC 51907 / DSM 11121 / KW20 / Rd).